A 25-amino-acid chain; its full sequence is Ocellatin-F1 (25 aa).

Leucine amide is present on Leu25.

This sequence belongs to the frog skin active peptide (FSAP) family. Ocellatin subfamily. Expressed by the skin glands.

It localises to the secreted. Functionally, antibacterial peptide that inhibits reference strains of both Gram-negative bacteria (E.coli, P.aeruginosa, E.cloacae, K.pneumoniae, and A.actinomycetemcomitans) and Gram-positive bacteria (S.aureus) with relatively low potencies (MIC=25-400 uM). Shows antifungal activity against C.lusitaniae (MIC=50.25 uM), but no activity against C.albicans. In the presence of an alkaloid (bufotenine), inhibits cellular infection by the rabies virus. The peptide shows very low hemolytic activity against rabbit erythrocytes. The low amphipathicity of alpha-helices demonstrated by wheel projection as well as the low cationicity may explain the low antibacterial and hemolytic potencies. This chain is Ocellatin-F1, found in Leptodactylus labyrinthicus (Labyrinth frog).